A 457-amino-acid chain; its full sequence is Argininosuccinate lyase (457 aa).

It belongs to the lyase 1 family. Argininosuccinate lyase subfamily.

It localises to the cytoplasm. The catalysed reaction is 2-(N(omega)-L-arginino)succinate = fumarate + L-arginine. It participates in amino-acid biosynthesis; L-arginine biosynthesis; L-arginine from L-ornithine and carbamoyl phosphate: step 3/3. The sequence is that of Argininosuccinate lyase from Histophilus somni (strain 129Pt) (Haemophilus somnus).